Consider the following 239-residue polypeptide: Ubiquinone biosynthesis O-methyltransferase (239 aa).

S-adenosyl-L-methionine contacts are provided by Arg-44, Gly-63, Asp-84, and Met-128.

It belongs to the methyltransferase superfamily. UbiG/COQ3 family.

It catalyses the reaction a 3-demethylubiquinol + S-adenosyl-L-methionine = a ubiquinol + S-adenosyl-L-homocysteine + H(+). The catalysed reaction is a 3-(all-trans-polyprenyl)benzene-1,2-diol + S-adenosyl-L-methionine = a 2-methoxy-6-(all-trans-polyprenyl)phenol + S-adenosyl-L-homocysteine + H(+). It participates in cofactor biosynthesis; ubiquinone biosynthesis. O-methyltransferase that catalyzes the 2 O-methylation steps in the ubiquinone biosynthetic pathway. In Xanthomonas axonopodis pv. citri (strain 306), this protein is Ubiquinone biosynthesis O-methyltransferase.